We begin with the raw amino-acid sequence, 132 residues long: Small ribosomal subunit protein uS8 (132 aa).

It belongs to the universal ribosomal protein uS8 family. As to quaternary structure, part of the 30S ribosomal subunit. Contacts proteins S5 and S12.

Functionally, one of the primary rRNA binding proteins, it binds directly to 16S rRNA central domain where it helps coordinate assembly of the platform of the 30S subunit. In Geobacter metallireducens (strain ATCC 53774 / DSM 7210 / GS-15), this protein is Small ribosomal subunit protein uS8.